Here is a 344-residue protein sequence, read N- to C-terminus: Estradiol 17-beta-dehydrogenase 1 (344 aa).

Position 3 to 32 (3 to 32) interacts with NAD(+); sequence STVVLITGCSSGIGLHLAVRLASDRSQSFK. Ser-143 serves as a coordination point for substrate. The Proton acceptor role is filled by Tyr-156.

This sequence belongs to the short-chain dehydrogenases/reductases (SDR) family. In terms of assembly, homodimer.

It localises to the cytoplasm. The catalysed reaction is 17beta-estradiol + NAD(+) = estrone + NADH + H(+). It catalyses the reaction 17beta-estradiol + NADP(+) = estrone + NADPH + H(+). It participates in steroid biosynthesis; estrogen biosynthesis. Favors the reduction of estrogens and androgens. Uses preferentially NADH. This chain is Estradiol 17-beta-dehydrogenase 1 (Hsd17b1), found in Rattus norvegicus (Rat).